The sequence spans 147 residues: UPF0735 ACT domain-containing protein GK2605 (147 aa).

The ACT domain occupies threonine 69–serine 144.

This sequence belongs to the UPF0735 family.

This chain is UPF0735 ACT domain-containing protein GK2605, found in Geobacillus kaustophilus (strain HTA426).